The chain runs to 22 residues: Mu-conotoxin CnIIIC (22 aa).

At Gln1 the chain carries Pyrrolidone carboxylic acid; partial. 3 cysteine pairs are disulfide-bonded: Cys3–Cys15, Cys4–Cys21, and Cys10–Cys22. The residue at position 22 (Cys22) is a Cysteine amide.

Belongs to the conotoxin M superfamily. As to expression, expressed by the venom duct.

Its subcellular location is the secreted. Functionally, mu-conotoxins block voltage-gated sodium channels (Nav). This synthetic toxin blocks both voltage-gated sodium channels and nicotinic acetylcholine receptor (nAChR). Inhibits the skeletal muscle rNav1.4/SCN4A (IC(50)=1.3 nM) and the brain rNav1.2/SCN2A in a long-lasting manner. A low inhibition is also observed on neuronal mNav1.6/SCN8A and mNav1.7/SCN9A. Modestly blocks nAChR alpha-3/beta-2 subtype (IC(50)=450 nM) (partially reversible) and, to a lesser extent, alpha-7 and alpha-4/beta-2 subtypes (reversible). In vitro, decreases twitch tension in mouse hemidiaphragms (IC(50)=150 nM), and displays a high blocking effect in mouse extensor digitorum longus muscles (IC(50)=46 nM). The chain is Mu-conotoxin CnIIIC from Conus consors (Singed cone).